Consider the following 471-residue polypeptide: Phosphatidylserine synthase 2 (471 aa).

The tract at residues 1–26 (MRRGERRVAGGSGSESPLLEGRRSTE) is disordered. Residues 1–40 (MRRGERRVAGGSGSESPLLEGRRSTESEVYDDGTNTFFWR) are Cytoplasmic-facing. Phosphoserine occurs at positions 12, 14, and 16. Residues 41 to 61 (AHTLTVLFILTCALGYVTLLE) traverse the membrane as a helical segment. Residues 62–74 (ETPQDTAYNTKRG) lie on the Lumenal side of the membrane. A helical membrane pass occupies residues 75-95 (IVASILVFLCFGVTQAKDGPF). The Cytoplasmic portion of the chain corresponds to 96–104 (SRPHPAYWR). Residues 105-125 (FWLCVSVVYELFLIFILFQTV) traverse the membrane as a helical segment. Residues 126–291 (HDGRQFLKYV…EWKPASSLHR (166 aa)) lie on the Lumenal side of the membrane. N-linked (GlcNAc...) asparagine glycosylation occurs at asparagine 159. The helical transmembrane segment at 292–312 (WLAVCGIILVFLLAELNTFYL) threads the bilayer. Position 313 (lysine 313) is a topological domain, cytoplasmic. The chain crosses the membrane as a helical span at residues 314–334 (FVLWMPPEHYLVLLRLVFFVN). The Lumenal portion of the chain corresponds to 335–354 (VGGVAMREIYDFMDELKPHR). Residues 355–375 (KLGQQAWLVAAITVTELLIVV) form a helical membrane-spanning segment. Topologically, residues 376 to 381 (KYDPHT) are cytoplasmic. The chain crosses the membrane as a helical span at residues 382 to 402 (LTLSLPFYISQCWTLGSILVL). Residues 403–471 (TWTVWRFFLR…PAEEGPSAAS (69 aa)) are Lumenal-facing. Residues 423–471 (RQKQQSHQAINNGDGHPGPEDDLPGTGTAEEEGTTNDGVPAEEGPSAAS) are disordered.

It belongs to the phosphatidyl serine synthase family.

The protein resides in the endoplasmic reticulum membrane. It carries out the reaction a 1,2-diacyl-sn-glycero-3-phosphoethanolamine + L-serine = a 1,2-diacyl-sn-glycero-3-phospho-L-serine + ethanolamine. The enzyme catalyses 1-hexadecanoyl-2-(9Z-octadecenoyl)-sn-glycero-3-phosphoethanolamine + L-serine = 1-hexadecanoyl-2-(9Z-octadecenoyl)-sn-glycero-3-phospho-L-serine + ethanolamine. It catalyses the reaction 1-hexadecanoyl-2-(4Z,7Z,10Z,13Z,16Z,19Z-docosahexaenoyl)-sn-glycero-3-phosphoethanolamine + L-serine = 1-hexadecanoyl-2-(4Z,7Z,10Z,13Z,16Z,19Z-docosahexaenoyl)-sn-glycero-3-phosphoserine + ethanolamine. The catalysed reaction is 1-octadecanoyl-2-(5Z,8Z,11Z,14Z)-eicosatetraenoyl-sn-glycero-3-phosphoethanolamine + L-serine = 1-octadecanoyl-2-(5Z,8Z,11Z,14Z)-eicosatetraenoyl-sn-glycero-3-phosphoserine + ethanolamine. It carries out the reaction 1-octadecanoyl-2-(4Z,7Z,10Z,13Z,16Z,19Z-docosahexaenoyl)-sn-glycero-3-phosphoethanolamine + L-serine = 1-octadecanoyl-2-(4Z,7Z,10Z,13Z,16Z,19Z-docosahexaenoyl)-sn-glycero-3-phosphoserine + ethanolamine. The enzyme catalyses 1-(1Z-octadecenyl)-2-(4Z,7Z,10Z,13Z,16Z,19Z-docosahexaenoyl)-sn-glycero-3-phosphoethanolamine + L-serine = 1-(1Z-octadecenyl)-2-(4Z,7Z,10Z,13Z,16Z,19Z-docosahexaenoyl)-sn-glycero-3-phospho-L-serine + ethanolamine. It catalyses the reaction 1-octadecanoyl-2-(9Z-octadecenoyl)-sn-glycero-3-phosphoethanolamine + L-serine = 1-octadecanoyl-2-(9Z-octadecenoyl)-sn-glycero-3-phospho-L-serine + ethanolamine. The catalysed reaction is 1-(1Z-octadecenyl)-2-(9Z-octadecenoyl)-sn-glycero-3-phosphoethanolamine + L-serine = 1-(1Z-octadecenyl)-2-(9Z-octadecenoyl)-sn-glycero-3-phospho-L-serine + ethanolamine. It carries out the reaction 1-(1Z-octadecenyl)-2-(5Z,8Z,11Z,14Z- eicosatetraenoyl)-sn-glycero-3-phosphoethanolamine + L-serine = 1-(1Z-octadecenyl)-2-(5Z,8Z,11Z,14Z-eicosatetraenoyl)-sn-glycero-3-phospho-L-serine + ethanolamine. The protein operates within phospholipid metabolism; phosphatidylserine biosynthesis. Its function is as follows. Catalyzes a base-exchange reaction in which the polar head group of phosphatidylethanolamine (PE) or phosphatidylcholine (PC) is replaced by L-serine. Catalyzes the conversion of phosphatatidylethanolamine and does not act on phosphatidylcholine. Can utilize both phosphatidylethanolamine (PE) plasmalogen and diacyl PE as substrate and the latter is six times better utilized, indicating the importance of an ester linkage at the sn-1 position. Although it shows no sn-1 fatty acyl preference, exhibits significant preference towards docosahexaenoic acid (22:6n-3) compared with 18:1 or 20:4 at the sn-2 position. The chain is Phosphatidylserine synthase 2 (Ptdss2) from Rattus norvegicus (Rat).